A 27-amino-acid polypeptide reads, in one-letter code: Conotoxin (27 aa).

3 cysteine pairs are disulfide-bonded: C2–C16, C6–C18, and C12–C23. Residue N27 is modified to Asparagine amide.

In terms of tissue distribution, expressed by the venom duct.

It localises to the secreted. Its function is as follows. Probable neurotoxin that inhibits ion channels. The protein is Conotoxin of Conus amadis (Amadis cone).